The chain runs to 1942 residues: Myosin-2 (1942 aa).

One can recognise a Myosin N-terminal SH3-like domain in the interval 33 to 82; sequence DAKTSVFVAEPKESFVKGTIQSKDAGKVTVKTEAGATLTVKEDQIFPMNP. Phosphothreonine is present on residues Thr-64 and Thr-69. The region spanning 86 to 785 is the Myosin motor domain; that stretch reads DKIEDMAMMT…LLGLLEEMRD (700 aa). Position 179–186 (179–186) interacts with ATP; sequence GESGAGKT. Phosphotyrosine is present on Tyr-389. Position 419 is a phosphothreonine (Thr-419). Ser-625 carries the post-translational modification Phosphoserine. Residues 662–684 are actin-binding; it reads LNKLMTNLRSTHPHFVRCIIPNE. At His-760 the chain carries Pros-methylhistidine. Residues 788-817 form the IQ domain; it reads LAQLITRTQAMCRGFLARVEYQKMVERRES. Residues 849–1930 adopt a coiled-coil conformation; that stretch reads SAETEKEMAT…ESQVNKLRVK (1082 aa). Phosphoserine is present on residues Ser-1095 and Ser-1099. Residues 1130 to 1175 form a disordered region; sequence EAERASRAKAEKQRSDLSRELEEISERLEEAGGATSAQIEMNKKRE. Basic and acidic residues predominate over residues 1131–1159; sequence AERASRAKAEKQRSDLSRELEEISERLEE. 2 positions are modified to phosphoserine: Ser-1165 and Ser-1240. Thr-1244 is subject to Phosphothreonine. Residue Ser-1246 is modified to Phosphoserine. Phosphothreonine is present on Thr-1258. Ser-1264 carries the post-translational modification Phosphoserine. Phosphothreonine is present on Thr-1289. Ser-1291, Ser-1295, Ser-1306, and Ser-1309 each carry phosphoserine. Tyr-1467 bears the Phosphotyrosine mark. The residue at position 1470 (Thr-1470) is a Phosphothreonine. Ser-1477 bears the Phosphoserine mark. Phosphotyrosine is present on Tyr-1495. Residue Ser-1498 is modified to Phosphoserine. Thr-1504 carries the post-translational modification Phosphothreonine. Ser-1517 carries the post-translational modification Phosphoserine. A Phosphothreonine modification is found at Thr-1520. 6 positions are modified to phosphoserine: Ser-1557, Ser-1577, Ser-1603, Ser-1606, Ser-1717, and Ser-1729. Phosphothreonine is present on residues Thr-1733 and Thr-1739. Ser-1742 is modified (phosphoserine).

The protein belongs to the TRAFAC class myosin-kinesin ATPase superfamily. Myosin family. Muscle myosin is a hexameric protein that consists of 2 heavy chain subunits (MHC), 2 alkali light chain subunits (MLC) and 2 regulatory light chain subunits (MLC-2). Interacts with GCSAM. Expressed in type 2a myofibers in the tibialis anterior and soleus muscles (at protein level).

It is found in the cytoplasm. Its subcellular location is the myofibril. Myosins are actin-based motor molecules with ATPase activity essential for muscle contraction. This Mus musculus (Mouse) protein is Myosin-2.